The following is a 449-amino-acid chain: 23S rRNA (uracil(1939)-C(5))-methyltransferase RlmD (449 aa).

Residues 15–73 (KAIPAKNLTVTVTSLDPFGQGVARHEGKTVFVTGVLPGEQAEVQLTEDKRQFSHAKLKR) form the TRAM domain. Residues Cys86, Cys92, Cys95, and Cys173 each contribute to the [4Fe-4S] cluster site. The S-adenosyl-L-methionine site is built by Gln276, Phe305, Asn310, Glu326, Asn353, and Asp374. The Nucleophile role is filled by Cys400.

It belongs to the class I-like SAM-binding methyltransferase superfamily. RNA M5U methyltransferase family. RlmD subfamily.

The enzyme catalyses uridine(1939) in 23S rRNA + S-adenosyl-L-methionine = 5-methyluridine(1939) in 23S rRNA + S-adenosyl-L-homocysteine + H(+). Catalyzes the formation of 5-methyl-uridine at position 1939 (m5U1939) in 23S rRNA. The chain is 23S rRNA (uracil(1939)-C(5))-methyltransferase RlmD from Pectobacterium carotovorum subsp. carotovorum (strain PC1).